A 69-amino-acid polypeptide reads, in one-letter code: Pleurain-A3 (69 aa).

The first 22 residues, 1–22 (MFTLKKTLLLLFFLGTISISLC), serve as a signal peptide directing secretion. Residues 23–43 (KQARDADEDDGRKMTEEEVKR) constitute a propeptide that is removed on maturation. A disulfide bridge links C63 with C69.

It belongs to the frog skin active peptide (FSAP) family. Pleurain subfamily. In terms of tissue distribution, expressed by the skin glands.

It is found in the secreted. In terms of biological role, antimicrobial peptide. Has activity against Gram-positive and -negative bacteria, and fungi. Has little hemolytic activity on red blood cells. The protein is Pleurain-A3 of Nidirana pleuraden (Yunnan pond frog).